Here is a 309-residue protein sequence, read N- to C-terminus: MKHGILVAYKPKGPTSHDVVDEVRKKLKTRKVGHGGTLDPFACGVLIIGVNQGTRILEFYKDLKKVYWVKMRLGLITETFDITGEVVEERECNVTEEEIREAIFSFVGEYDQVPPAYSAKKYKGERLYKLAREGKIINLPPKRVKIFKIWDVNIEGRDVSFRVEVSPGTYIRSLCMDIGYKLGCGATAVELVRESVGPHTIEESLNVFEAAPEEIENRIIPLEKCLEWLPRVVVHQESTKMILNGSQIHLEMLKEWDGFKKGEVVRVFNEEGRLLALAEAERNSSFLETLRKHERNERVLTLRKVFNTR.

Aspartate 39 (nucleophile) is an active-site residue. The 78-residue stretch at 229–306 (LPRVVVHQES…ERVLTLRKVF (78 aa)) folds into the PUA domain.

It belongs to the pseudouridine synthase TruB family. Type 1 subfamily.

The enzyme catalyses uridine(55) in tRNA = pseudouridine(55) in tRNA. Functionally, responsible for synthesis of pseudouridine from uracil-55 in the psi GC loop of transfer RNAs. The sequence is that of tRNA pseudouridine synthase B from Thermotoga maritima (strain ATCC 43589 / DSM 3109 / JCM 10099 / NBRC 100826 / MSB8).